Consider the following 460-residue polypeptide: Cysteine--tRNA ligase (460 aa).

Residue C29 coordinates Zn(2+). Positions 31 to 41 (ATPQSSPHIGH) match the 'HIGH' region motif. The Zn(2+) site is built by C212, H237, and E241. A 'KMSKS' region motif is present at residues 268-272 (KMSKS). Residue K271 participates in ATP binding.

The protein belongs to the class-I aminoacyl-tRNA synthetase family. Monomer. The cofactor is Zn(2+).

It localises to the cytoplasm. The catalysed reaction is tRNA(Cys) + L-cysteine + ATP = L-cysteinyl-tRNA(Cys) + AMP + diphosphate. The sequence is that of Cysteine--tRNA ligase from Corynebacterium glutamicum (strain ATCC 13032 / DSM 20300 / JCM 1318 / BCRC 11384 / CCUG 27702 / LMG 3730 / NBRC 12168 / NCIMB 10025 / NRRL B-2784 / 534).